Consider the following 413-residue polypeptide: Metacaspase-1A (413 aa).

Residues 1–104 (MQNHHHQQSS…PTDPVAFGHG (104 aa)) are disordered. Pro residues predominate over residues 36 to 47 (SPQPGYGAPPPH). Positions 49-58 (GYGQPPSGYG) are enriched in low complexity. Over residues 75–85 (GMNQYQNTYSH) the composition is skewed to polar residues. Active-site residues include His204 and Cys260.

The protein belongs to the peptidase C14B family.

Functionally, involved in cell death (apoptosis). Required for the apoptotic-like loss of membrane phospholipid asymmetry at stationary phase and facilitates growth under conditions of endoplasmic reticulum stress. This Aspergillus fumigatus (strain CBS 144.89 / FGSC A1163 / CEA10) (Neosartorya fumigata) protein is Metacaspase-1A (casA).